A 144-amino-acid chain; its full sequence is MKETQEELRQRIGHTAYQVTQNSATEHAFTGKYDDFFEEGIYVDIVSGEVLFSSLDKFQSGCGWPAFSKPIENRMVTNHQDHSHGMHRIEVRSRQADSHLGHVFNDGPVDAGGLRYCINSAALDFIPYDQMAKRGYGDYLSLFD.

The MsrB domain occupies 5–128 (QEELRQRIGH…NSAALDFIPY (124 aa)). Cys-117 (nucleophile) is an active-site residue.

This sequence belongs to the MsrB Met sulfoxide reductase family.

The enzyme catalyses L-methionyl-[protein] + [thioredoxin]-disulfide + H2O = L-methionyl-(R)-S-oxide-[protein] + [thioredoxin]-dithiol. The chain is Peptide methionine sulfoxide reductase MsrB from Streptococcus agalactiae serotype Ia (strain ATCC 27591 / A909 / CDC SS700).